The chain runs to 274 residues: Penicillin-insensitive murein endopeptidase (274 aa).

Positions 1–19 (MNKTAIALLALLASSASLA) are cleaved as a signal peptide. 3 cysteine pairs are disulfide-bonded: Cys-44/Cys-265, Cys-187/Cys-235, and Cys-216/Cys-223. Residues His-110, His-113, Asp-120, Asp-147, His-150, and His-211 each contribute to the Zn(2+) site. Residues 227-274 (PLPPPGDGCGAELQSWFEPPKPGTTKPEKKTPPPLPPSCQALLDEHVI) form a disordered region.

Belongs to the peptidase M74 family. In terms of assembly, dimer. Zn(2+) is required as a cofactor.

The protein resides in the periplasm. Murein endopeptidase that cleaves the D-alanyl-meso-2,6-diamino-pimelyl amide bond that connects peptidoglycan strands. Likely plays a role in the removal of murein from the sacculus. In Escherichia coli (strain ATCC 8739 / DSM 1576 / NBRC 3972 / NCIMB 8545 / WDCM 00012 / Crooks), this protein is Penicillin-insensitive murein endopeptidase.